We begin with the raw amino-acid sequence, 348 residues long: Ubiquitin thioesterase OTU1 (348 aa).

Over residues 1-11 (MFGPAKGRHFG) the composition is skewed to basic residues. The disordered stretch occupies residues 1–39 (MFGPAKGRHFGVHPAPGFPGGVSQQAAGTKAGPAGAWPV). The interval 50–128 (RCKAKDGTHV…IIEEDQTRPR (79 aa)) is UBX-like. The region spanning 149–274 (LTRTVVPADN…GIHYDPLQRN (126 aa)) is the OTU domain. The interval 154 to 160 (VPADNSC) is cys-loop. Residue Asp157 is part of the active site. The Nucleophile role is filled by Cys160. Residues 213–223 (IKRDDTWGGAI) form a variable-loop region. The his-loop stretch occupies residues 263-267 (YDGIH). Residue Ile266 participates in substrate binding. His267 is a catalytic residue. Positions 291 to 296 (DIVLVQ) are S2 site. The C2H2-type zinc-finger motif lies at 318–342 (LRCMVCQKGLTGQAEAREHAKETGH). Residue His342 is part of the active site.

As to quaternary structure, interacts with VCP; the interaction is direct. Interacts with FAF2/UBXD8. Interacts with DERL1; however interaction is dependent on the UBAX-like region, suggesting that it may be indirect. Interacts with PLAA, UBXN6 and VCP; may form a complex involved in macroautophagy.

It localises to the cytoplasm. It carries out the reaction Thiol-dependent hydrolysis of ester, thioester, amide, peptide and isopeptide bonds formed by the C-terminal Gly of ubiquitin (a 76-residue protein attached to proteins as an intracellular targeting signal).. Its function is as follows. Hydrolase that can remove conjugated ubiquitin from proteins and participates in endoplasmic reticulum-associated degradation (ERAD) for misfolded lumenal proteins. May act by triming the ubiquitin chain on the associated substrate to facilitate their threading through the VCP/p97 pore. Ubiquitin moieties on substrates may present a steric impediment to the threading process when the substrate is transferred to the VCP pore and threaded through VCP's axial channel. Mediates deubiquitination of 'Lys-27'-, 'Lys-29'- and 'Lys-33'-linked polyubiquitin chains. Also able to hydrolyze 'Lys-11'-linked ubiquitin chains. Cleaves both polyubiquitin and di-ubiquitin. May play a role in macroautophagy, regulating for instance the clearance of damaged lysosomes. May recruit PLAA, UBXN6 and VCP to damaged lysosome membranes decorated with K48-linked ubiquitin chains and remove these chains allowing autophagosome formation. This chain is Ubiquitin thioesterase OTU1 (YOD1), found in Homo sapiens (Human).